A 553-amino-acid polypeptide reads, in one-letter code: MAAVSLRLGDLVWGKLGRYPPWPGKIVNPPKDLKKPRGKKCFFVKFFGTEDHAWIKVEQLKPYHAHKEEMIKINKGKRFQQAVDAVEEFLRRAKGKDQTSSHNSSDDKNRRNSSEERSRPNSGDEKRKLSLSEGKVKKNMGEGKKRVSSGSSERGSKSPLKRAQEQSPRKRGRPPKDEKDLTIPESSTVKGMMAGPMAAFKWQPTASEPVKDADPHFHHFLLSQTEKPAVCYQAITKKLKICEEETGSTSIQAADSTAVNGSITPTDKKIGFLGLGLMGSGIVSNLLKMGHTVTVWNRTAEKCDLFIQEGARLGRTPAEVVSTCDITFACVSDPKAAKDLVLGPSGVLQGIRPGKCYVDMSTVDADTVTELAQVIVSRGGRFLEAPVSGNQQLSNDGMLVILAAGDRGLYEDCSSCFQAMGKTSFFLGEVGNAAKMMLIVNMVQGSFMATIAEGLTLAQVTGQSQQTLLDILNQGQLASIFLDQKCQNILQGNFKPDFYLKYIQKDLRLAIALGDAVNHPTPMAAAANEVYKRAKALDQSDNDMSAVYRAYIH.

One can recognise a PWWP domain in the interval 8–66 (LGDLVWGKLGRYPPWPGKIVNPPKDLKKPRGKKCFFVKFFGTEDHAWIKVEQLKPYHAH). Basic and acidic residues-rich tracts occupy residues 92–145 (RAKG…EGKK) and 162–182 (RAQEQSPRKRGRPPKDEKDLT). Positions 92-188 (RAKGKDQTSS…KDLTIPESST (97 aa)) are disordered. Serine 130 carries the phosphoserine modification. Lysine 135 participates in a covalent cross-link: Glycyl lysine isopeptide (Lys-Gly) (interchain with G-Cter in SUMO2). At serine 167 the chain carries Phosphoserine. Positions 168–180 (PRKRGRPPKDEKD) form a DNA-binding region, a.T hook. Residues lysine 176, lysine 179, lysine 201, and lysine 211 each participate in a glycyl lysine isopeptide (Lys-Gly) (interchain with G-Cter in SUMO2) cross-link. Residues 214-217 (DPHF) are interaction with histone H3. Residues 216-225 (HFHHFLLSQT) are interaction with KDM1B. Glycyl lysine isopeptide (Lys-Gly) (interchain with G-Cter in SUMO2) cross-links involve residues lysine 227, lysine 237, lysine 240, and lysine 269. The interval 261–553 (GSITPTDKKI…MSAVYRAYIH (293 aa)) is dehydrogenase domain. Position 271-285 (271-285 (GFLGLGLMGSGIVSN)) interacts with NAD(+). Residue lysine 302 forms a Glycyl lysine isopeptide (Lys-Gly) (interchain with G-Cter in SUMO2) linkage. Threonine 362 and lysine 505 together coordinate NAD(+). A Phosphoserine modification is found at serine 540.

This sequence belongs to the HIBADH-related family. NP60 subfamily. As to quaternary structure, homotetramere. Interacts with MAPK14. Interacts with KDM1B at nucleosomes; this interaction stimulates H3K4me1 and H3K4me2 demethylation. Binds to mononucleosomes. Interacts with GATA4; the interaction is required for a synergistic activation of GATA4 target genes transcription.

The protein localises to the nucleus. It is found in the chromosome. Cytokine-like nuclear factor with chromatin gene reader activity involved in chromatin modification and regulation of gene expression. Acts as a nucleosome-destabilizing factor that is recruited to genes during transcriptional activation. Recognizes and binds histone H3 without a preference for specific epigenetic markers and also binds DNA. Interacts with KDM1B and promotes its histone demethylase activity by facilitating the capture of H3 tails, they form a multifunctional enzyme complex that modifies transcribed chromatin and facilitates Pol II transcription through nucleosomes. Stimulates the acetylation of 'Lys-56' of nucleosomal histone H3 (H3K56ac) by EP300. With GATA4, co-binds a defined set of heart development genes and coregulates their expression during cardiomyocyte differentiation. Regulates p38 MAP kinase activity by mediating stress activation of MAPK14/p38alpha and specifically regulating MAPK14 signaling. Indirectly promotes phosphorylation of MAPK14 and activation of ATF2. The phosphorylation of MAPK14 requires upstream activity of MAP2K4 and MAP2K6. The sequence is that of Cytokine-like nuclear factor N-PAC from Homo sapiens (Human).